Reading from the N-terminus, the 1891-residue chain is Transcription initiation factor TFIID subunit 1 (1891 aa).

3 disordered regions span residues Met-1–Gly-34, Lys-154–Glu-180, and Ala-197–Lys-224. The 435-residue stretch at Met-1–Ile-435 folds into the Protein kinase 1 domain. Residues Met-156–Pro-165 are compositionally biased toward pro residues. The span at Ala-197–Asp-208 shows a compositional bias: low complexity. Ser-328 carries the post-translational modification Phosphoserine; by autocatalysis. Residues Pro-535–Leu-556 are disordered. The segment at Lys-538–Lys-997 is histone acetyltransferase (HAT). Lys-565 is modified (N6-acetyllysine). Glycyl lysine isopeptide (Lys-Gly) (interchain with G-Cter in SUMO2) cross-links involve residues Lys-570 and Lys-583. 3 disordered regions span residues Pro-990–Val-1009, Met-1128–Lys-1148, and Arg-1254–Arg-1278. Basic and acidic residues-rich tracts occupy residues Gln-995–Pro-1004, Ser-1139–Lys-1148, and Arg-1254–Lys-1270. The HMG box DNA-binding region spans Val-1216–Met-1294. The tract at residues Val-1363–Ala-1650 is interaction with ASF1A and ASF1B. The Nuclear localization signal motif lies at Pro-1372–Val-1379. 2 Bromo domains span residues Arg-1397–Lys-1505 and Leu-1519–Tyr-1628. In terms of domain architecture, Protein kinase 2 spans Met-1446 to Glu-1891. Disordered regions lie at residues Glu-1651–Ser-1676 and Ser-1690–Glu-1891. Residues Thr-1659–Pro-1668 show a composition bias toward pro residues. 2 positions are modified to phosphoserine: Ser-1690 and Ser-1693. Residues Ser-1690–Gln-1708 are compositionally biased toward polar residues. Composition is skewed to acidic residues over residues Gly-1711–Gly-1723 and Glu-1741–Asp-1756. A compositionally biased stretch (low complexity) spans Leu-1764–Leu-1778. Phosphoserine is present on residues Ser-1799, Ser-1802, and Ser-1820. Over residues Lys-1830–Ser-1840 the composition is skewed to polar residues. Residues Val-1846–Glu-1855 show a composition bias toward acidic residues. Ser-1847 bears the Phosphoserine mark. Residues Ser-1858–His-1867 show a composition bias toward polar residues.

It belongs to the TAF1 family. In terms of assembly, component of the TFIID basal transcription factor complex, composed of TATA-box-binding protein TBP, and a number of TBP-associated factors (TAFs). TFIID consists of at least TBP, TAF1, TAF2, TAF3, TAF4, TAF5, TAF6, TAF7, TAF8, TAF9, TAF10, TAF11, TAF12 and TAF13. Interacts with TAF7; the interaction is direct. TAF1, when part of the TFIID complex, interacts with C-terminus of TP53. Part of a TFIID-containing RNA polymerase II pre-initiation complex that is composed of TBP and at least GTF2A1, GTF2A2, GTF2E1, GTF2E2, GTF2F1, GTF2H2, GTF2H3, GTF2H4, GTF2H5, GTF2B, TCEA1, ERCC2, ERCC3, TAF1, TAF2, TAF3, TAF4, TAF5, TAF6, TAF7, TAF8, TAF9, TAF10, TAF11, TAF12 and TAF13. Component of some MLL1/MLL complex, at least composed of the core components KMT2A/MLL1, ASH2L, HCFC1/HCF1, WDR5 and RBBP5, as well as the facultative components BACC1, CHD8, E2F6, HSP70, INO80C, KANSL1, LAS1L, MAX, MCRS1, MGA, KAT8/MOF, PELP1, PHF20, PRP31, RING2, RUVB1/TIP49A, RUVB2/TIP49B, SENP3, TAF1, TAF4, TAF6, TAF7, TAF9 and TEX10. RB1 interacts with the N-terminal domain of TAF1. Interacts with ASF1A and ASF1B. Interacts (via bromo domains) with acetylated lysine residues on the N-terminus of histone H1.4, H2A, H2B, H3 and H4 (in vitro). The cofactor is Mg(2+). In terms of processing, phosphorylated by casein kinase II in vitro.

The protein localises to the nucleus. The catalysed reaction is L-seryl-[protein] + ATP = O-phospho-L-seryl-[protein] + ADP + H(+). It catalyses the reaction L-threonyl-[protein] + ATP = O-phospho-L-threonyl-[protein] + ADP + H(+). The enzyme catalyses L-lysyl-[protein] + acetyl-CoA = N(6)-acetyl-L-lysyl-[protein] + CoA + H(+). Its activity is regulated as follows. Autophosphorylates on Ser residues. Inhibited by retinoblastoma tumor suppressor protein, RB1. Binding to TAF1 or CIITA inhibits the histone acetyltransferase activity. In terms of biological role, the TFIID basal transcription factor complex plays a major role in the initiation of RNA polymerase II (Pol II)-dependent transcription. TFIID recognizes and binds promoters with or without a TATA box via its subunit TBP, a TATA-box-binding protein, and promotes assembly of the pre-initiation complex (PIC). The TFIID complex consists of TBP and TBP-associated factors (TAFs), including TAF1, TAF2, TAF3, TAF4, TAF5, TAF6, TAF7, TAF8, TAF9, TAF10, TAF11, TAF12 and TAF13. TAF1 is the largest component and core scaffold of the TFIID complex, involved in nucleating complex assembly. TAF1 forms a promoter DNA binding subcomplex of TFIID, together with TAF7 and TAF2. Contains novel N- and C-terminal Ser/Thr kinase domains which can autophosphorylate or transphosphorylate other transcription factors. Phosphorylates TP53 on 'Thr-55' which leads to MDM2-mediated degradation of TP53. Phosphorylates GTF2A1 and GTF2F1 on Ser residues. Possesses DNA-binding activity. Exhibits histone acetyltransferase activity towards histones H3 and H4. Essential for progression of the G1 phase of the cell cycle. The chain is Transcription initiation factor TFIID subunit 1 from Mus musculus (Mouse).